The following is a 139-amino-acid chain: Lymphocyte antigen 6H (139 aa).

A signal peptide spans 1 to 25 (MLPAAMKSLGLALLALLLCPSPAHG). Residues 26–113 (LWCQDCTLAN…CEKDLCNGAS (88 aa)) form the UPAR/Ly6 domain. 5 cysteine pairs are disulfide-bonded: Cys-28–Cys-51, Cys-31–Cys-39, Cys-44–Cys-72, Cys-76–Cys-103, and Cys-104–Cys-109. Asn-35 carries an N-linked (GlcNAc...) asparagine glycan. Residue Asn-110 is the site of GPI-anchor amidated asparagine attachment. Positions 111-139 (GASVAGRSPWALAGGLLLSLGPALLWAGP) are cleaved as a propeptide — removed in mature form.

In terms of assembly, interacts with CHRNA4 and CHRNA7. In terms of tissue distribution, strongly expressed in brain, also found in lower levels in eye and reproductive tissues.

The protein localises to the cell membrane. Functionally, believed to act as modulator of nicotinic acetylcholine receptors (nAChRs) activity. In vitro inhibits alpha-3:beta-4-containing nAChRs maximum response. In vitro inhibits alpha-3:beta-4-containing nAChRs maximum response. May play a role in the intracellular trafficking of alpha-7-containing nAChRs and may inhibit their expression at the cell surface. Seems to inhibit alpha-7/CHRNA7 signaling in hippocampal neurons. The chain is Lymphocyte antigen 6H (Ly6h) from Mus musculus (Mouse).